Consider the following 1004-residue polypeptide: Caspase recruitment domain-containing protein 14 (1004 aa).

A CARD domain is found at 15–107 (DEETLWEMME…DVYTLVTGLQ (93 aa)). The stretch at 128-409 (LAGAIGSLQE…RTQLRQLQAE (282 aa)) forms a coiled coil. The interval 409 to 568 (EPPGVLKQEA…RRPARRILSQ (160 aa)) is maintains the protein in an inactive state. The residue at position 544 (serine 544) is a Phosphoserine. A PDZ domain is found at 568–658 (QVTMLAFQGD…FCCLSVKVNT (91 aa)). A Guanylate kinase-like domain is found at 807 to 990 (AESCLTLVPY…LLSCVRQAIA (184 aa)).

In terms of assembly, interacts (via CARD domain) with BCL10 (via CARD domain). Forms a complex with MALT1 and BCL10; resulting in the formation of a CBM (CARD14-BLC10-MALT1) complex. Interacts with TRAF2, TRAF3 and TRAF6. In terms of tissue distribution, isoform 1 is detected in placenta and epidermal keratinocytes. Isoform 2 is detected in leukocytes and fetal brain.

The protein resides in the cytoplasm. Acts as a scaffolding protein that can activate the inflammatory transcription factor NF-kappa-B and p38/JNK MAP kinase signaling pathways. Forms a signaling complex with BCL10 and MALT1, and activates MALT1 proteolytic activity and inflammatory gene expression. MALT1 is indispensable for CARD14-induced activation of NF-kappa-B and p38/JNK MAP kinases. May play a role in signaling mediated by TRAF2, TRAF3 and TRAF6 and protects cells against apoptosis. Functionally, not able to activate the inflammatory transcription factor NF-kappa-B and may function as a dominant negative regulator. The chain is Caspase recruitment domain-containing protein 14 (CARD14) from Homo sapiens (Human).